The primary structure comprises 506 residues: RNA2 polyprotein (506 aa).

It belongs to the nepoviruses RNA2 polyprotein family. In terms of processing, specific enzymatic cleavages in vivo by the P1 encoded 3C-like protease yield mature proteins.

It localises to the host cell junction. The protein localises to the host plasmodesma. The protein resides in the virion. The movement protein is assembled into tubules that allow the transport of virions from cell to cell. In Beta vulgaris subsp. vulgaris (Beet), this protein is RNA2 polyprotein.